We begin with the raw amino-acid sequence, 338 residues long: Heat-inducible transcription repressor HrcA (338 aa).

This sequence belongs to the HrcA family.

Its function is as follows. Negative regulator of class I heat shock genes (grpE-dnaK-dnaJ and groELS operons). Prevents heat-shock induction of these operons. The protein is Heat-inducible transcription repressor HrcA of Bacillus cereus (strain 03BB102).